A 551-amino-acid polypeptide reads, in one-letter code: L-lactate permease (551 aa).

13 consecutive transmembrane segments (helical) span residues 13–33, 37–57, 69–89, 131–151, 159–179, 194–214, 220–240, 244–264, 366–386, 405–425, 438–458, 494–514, and 530–550; these read NIWL…FALI, LKGY…ALLF, VVYG…AAVF, GAAG…GLGF, LCLI…PILV, MVGR…MAIM, IKET…AQYL, FIGP…CLTL, FDWF…SIVW, LALP…SNYS, TGHA…FLTG, VTGK…VGLV, and IFTC…TWMI.

This sequence belongs to the lactate permease family.

It localises to the cell inner membrane. It catalyses the reaction (S)-lactate(in) + H(+)(in) = (S)-lactate(out) + H(+)(out). The catalysed reaction is (R)-lactate(in) + H(+)(in) = (R)-lactate(out) + H(+)(out). The enzyme catalyses glycolate(in) + H(+)(in) = glycolate(out) + H(+)(out). Inhibited by the proton ionophore carbonyl cyanide m-chlorophenylhydrazone (CCCP). Its function is as follows. Uptake of L-lactate across the membrane. Can also transport D-lactate and glycolate. Seems to be driven by a proton motive force. The polypeptide is L-lactate permease (Escherichia coli (strain K12)).